A 341-amino-acid chain; its full sequence is uncharacterized protein (341 aa).

Basic residues predominate over residues 1–12; sequence NSRIAHVPKSKK. Disordered stretches follow at residues 1–21 and 291–317; these read NSRIAHVPKSKKPLNSASPRF and KARMQMSGKNYQQRPSRTTSPAVNPED. A compositionally biased stretch (polar residues) spans 297-312; sequence SGKNYQQRPSRTTSPA.

This is an uncharacterized protein from Lachancea kluyveri (strain ATCC 58438 / CBS 3082 / BCRC 21498 / NBRC 1685 / JCM 7257 / NCYC 543 / NRRL Y-12651) (Yeast).